The sequence spans 430 residues: Enolase (430 aa).

Glutamine 165 lines the (2R)-2-phosphoglycerate pocket. Glutamate 207 functions as the Proton donor in the catalytic mechanism. Aspartate 244, glutamate 287, and aspartate 314 together coordinate Mg(2+). (2R)-2-phosphoglycerate is bound by residues lysine 339, arginine 368, serine 369, and lysine 390. The active-site Proton acceptor is the lysine 339.

It belongs to the enolase family. In terms of assembly, component of the RNA degradosome, a multiprotein complex involved in RNA processing and mRNA degradation. The cofactor is Mg(2+).

It is found in the cytoplasm. It localises to the secreted. Its subcellular location is the cell surface. The enzyme catalyses (2R)-2-phosphoglycerate = phosphoenolpyruvate + H2O. Its pathway is carbohydrate degradation; glycolysis; pyruvate from D-glyceraldehyde 3-phosphate: step 4/5. Functionally, catalyzes the reversible conversion of 2-phosphoglycerate (2-PG) into phosphoenolpyruvate (PEP). It is essential for the degradation of carbohydrates via glycolysis. This is Enolase from Stenotrophomonas maltophilia (strain R551-3).